The sequence spans 248 residues: 2,3-dihydro-2,3-dihydroxybenzoate dehydrogenase (248 aa).

Residue 9-33 coordinates NAD(+); that stretch reads WVTGAGKGIGYATALAFVEAGAKVT. Ser-131 provides a ligand contact to substrate. Tyr-144 (proton acceptor) is an active-site residue.

Belongs to the short-chain dehydrogenases/reductases (SDR) family. Homotetramer; dimer of dimers. EntA and EntE interact together.

It carries out the reaction (2S,3S)-2,3-dihydroxy-2,3-dihydrobenzoate + NAD(+) = 2,3-dihydroxybenzoate + NADH + H(+). It participates in siderophore biosynthesis; enterobactin biosynthesis. Inhibited by cis-2-hydroxy-3-cyclohexen-1-carboxylate, cis-2-hydroxycyclohexane-1-carboxylate and trans-2-hydroxycyclohexane-1-carboxylate. Functionally, involved in the biosynthesis of the siderophore enterobactin (enterochelin), which is a macrocyclic trimeric lactone of N-(2,3-dihydroxybenzoyl)-serine. Catalyzes the reversible NAD-dependent oxidation of the C3-hydroxyl group of 2,3-dihydro-2,3-dihydroxybenzoate (2,3-diDHB), producing the transient intermediate 2-hydroxy-3-oxo-4,6-cyclohexadiene-1-carboxylate, which undergoes rapid aromatization to the final product, 2,3-dihydroxybenzoate (2,3-DHB). Only the compounds with a C3-hydroxyl group such as methyl 2,3-dihydro-2,3-dihydroxybenzoate, methyl-3-hydroxy-1,4-cyclohexadiene-1-carboxylate, trans-3-hydroxy-2-cyclohexene-1-carboxylate, cis-3-hydroxy-4-cyclohexene-1-carboxylate, cis-3-hydroxycyclohexane-1-carboxylic acid are oxidized to the corresponding ketone products. The stereospecificity of the C3 allylic alcohol group oxidation is 3R in a 1R,3R dihydro substrate. It can also increase the DHB-AMP ligase activity of EntE by interaction EntE. The chain is 2,3-dihydro-2,3-dihydroxybenzoate dehydrogenase from Escherichia coli (strain K12).